The primary structure comprises 349 residues: Core protein VP7 (349 aa).

N287 is a glycosylation site (N-linked (GlcNAc...) asparagine; by host).

It belongs to the orbivirus VP7 family. As to quaternary structure, homotrimer that assemble in a complex of 260 capsomers on an inner scaffold composed of VP3.

The protein localises to the virion. The VP7 protein is one of the five proteins (with VP1, VP3, VP4, and VP6) which form the inner capsid of the virus. The chain is Core protein VP7 (Segment-7) from Antilocapra americana (Pronghorn).